Consider the following 450-residue polypeptide: UDP-N-acetylmuramoylalanine--D-glutamate ligase (450 aa).

119–125 (GSNGKTT) serves as a coordination point for ATP.

Belongs to the MurCDEF family.

Its subcellular location is the cytoplasm. It catalyses the reaction UDP-N-acetyl-alpha-D-muramoyl-L-alanine + D-glutamate + ATP = UDP-N-acetyl-alpha-D-muramoyl-L-alanyl-D-glutamate + ADP + phosphate + H(+). It functions in the pathway cell wall biogenesis; peptidoglycan biosynthesis. Functionally, cell wall formation. Catalyzes the addition of glutamate to the nucleotide precursor UDP-N-acetylmuramoyl-L-alanine (UMA). This is UDP-N-acetylmuramoylalanine--D-glutamate ligase from Bacillus anthracis (strain A0248).